Here is a 376-residue protein sequence, read N- to C-terminus: Alcohol dehydrogenase class-3 (376 aa).

An N-acetylserine modification is found at Ser-1. Zn(2+) is bound by residues Cys-47, His-69, Cys-99, Cys-102, Cys-105, Cys-113, and Cys-176.

The protein belongs to the zinc-containing alcohol dehydrogenase family. Class-III subfamily. In terms of assembly, homodimer. The cofactor is Zn(2+). In terms of tissue distribution, liver and gut.

The protein resides in the cytoplasm. The catalysed reaction is a primary alcohol + NAD(+) = an aldehyde + NADH + H(+). It carries out the reaction a secondary alcohol + NAD(+) = a ketone + NADH + H(+). It catalyses the reaction S-(hydroxymethyl)glutathione + NADP(+) = S-formylglutathione + NADPH + H(+). The enzyme catalyses S-(hydroxymethyl)glutathione + NAD(+) = S-formylglutathione + NADH + H(+). The catalysed reaction is S-nitrosoglutathione + NADH + H(+) = S-(hydroxysulfenamide)glutathione + NAD(+). Functionally, class-III ADH is remarkably ineffective in oxidizing ethanol, but it readily catalyzes the oxidation of long-chain primary alcohols and the oxidation of S-(hydroxymethyl) glutathione. Also acts as a S-nitroso-glutathione reductase by catalyzing the NADH-dependent reduction of S-nitrosoglutathione, thereby regulating protein S-nitrosylation. The chain is Alcohol dehydrogenase class-3 from Myxine glutinosa (Atlantic hagfish).